The sequence spans 497 residues: Nuclear pore complex protein npp-16 (497 aa).

Disordered stretches follow at residues 76-95 (VPRR…APRK), 210-308 (TKKS…SAPK), and 359-379 (MENQ…GEYV). 2 stretches are compositionally biased toward basic and acidic residues: residues 231-240 (KDGDKPKETP) and 250-260 (KPAEPSEEPKA). The interval 390–497 (EPDAVLSSKV…FTDKILEVAV (108 aa)) is ranBD1.

Interacts with importin beta imb-1. Interacts with DNA-directed RNA polymerase III subunit rpc-1. Interacts with TATA-box-binding protein tbp-1. Interacts with GTF3C5 homolog tftc-5. Interacts with GTF3C3 homolog tftc-3.

It is found in the nucleus. The protein localises to the nuclear pore complex. Its subcellular location is the nucleus membrane. Its function is as follows. Component of the nuclear pore complex. Plays a direct role in nuclear protein import. Required for anoxia-induced prophase arrest; may function in concert with cdk-1 to arrest prophase blastomeres in response to anoxia. The sequence is that of Nuclear pore complex protein npp-16 from Caenorhabditis elegans.